The primary structure comprises 309 residues: Protein lifeguard 3 (309 aa).

Disordered stretches follow at residues 1 to 31 (MSNP…QPSV) and 64 to 84 (PMNY…SFRP). Basic and acidic residues predominate over residues 70–84 (DYNEEERAGSDSFRP). Residues Ser79 and Ser81 each carry the phosphoserine modification. 7 helical membrane-spanning segments follow: residues 101-121 (YCII…FTFV), 132-152 (VAVY…LACC), 163-183 (IILL…ISSM), 188-208 (AVII…IFCF), 221-241 (FCVL…VLIF), 244-264 (IYWL…LFLA), and 286-306 (GALQ…QLVG).

It belongs to the BI1 family. LFG subfamily. As to expression, expressed in most tissues except spleen, thymus and testis.

Its subcellular location is the membrane. The protein resides in the lysosome membrane. The protein localises to the endosome membrane. Its function is as follows. Negatively regulates aortic matrix metalloproteinase-9 (MMP9) production and may play a protective role in vascular remodeling. The polypeptide is Protein lifeguard 3 (Tmbim1) (Mus musculus (Mouse)).